Reading from the N-terminus, the 631-residue chain is 1-deoxy-D-xylulose-5-phosphate synthase (631 aa).

Thiamine diphosphate is bound by residues histidine 87 and 128 to 130 (GHS). Residue aspartate 159 participates in Mg(2+) binding. Residues 160–161 (GA), asparagine 188, phenylalanine 295, and glutamate 377 each bind thiamine diphosphate. Residue asparagine 188 participates in Mg(2+) binding.

Belongs to the transketolase family. DXPS subfamily. As to quaternary structure, homodimer. The cofactor is Mg(2+). Thiamine diphosphate serves as cofactor.

The catalysed reaction is D-glyceraldehyde 3-phosphate + pyruvate + H(+) = 1-deoxy-D-xylulose 5-phosphate + CO2. It participates in metabolic intermediate biosynthesis; 1-deoxy-D-xylulose 5-phosphate biosynthesis; 1-deoxy-D-xylulose 5-phosphate from D-glyceraldehyde 3-phosphate and pyruvate: step 1/1. Its function is as follows. Catalyzes the acyloin condensation reaction between C atoms 2 and 3 of pyruvate and glyceraldehyde 3-phosphate to yield 1-deoxy-D-xylulose-5-phosphate (DXP). The chain is 1-deoxy-D-xylulose-5-phosphate synthase from Pseudomonas entomophila (strain L48).